We begin with the raw amino-acid sequence, 288 residues long: MAMSSYLINSNYVDPKFPPCEEYSQSDYLPNHSPDYYSSQRQEPAAFQPDSLYHHHPHQQQRAEPPYTQCQRAGQPASVVMSPRGHVLPPSGLQTTPVPEQSHRCESVTPSPPPPPSCGQTPHSQGASSPASTRKDPVVYPWMKKVHVNIVSSNYTGGEPKRSRTAYTRQQVLELEKEFHYNRYLTRRRRVEIAHTLCLSERQIKIWFQNRRMKWKKDHKLPNTKVRSGSTNTNSQVLTGFPKPHWTPIAGRDTCMIYAPSLAVPDCETECRSGSHASDHPSLHFGPE.

The interval 10–136 (SNYVDPKFPP…ASSPASTRKD (127 aa)) is disordered. The span at 118 to 132 (CGQTPHSQGASSPAS) shows a compositional bias: polar residues. The Antp-type hexapeptide motif lies at 139–144 (VYPWMK). A DNA-binding region (homeobox) is located at residues 160-219 (PKRSRTAYTRQQVLELEKEFHYNRYLTRRRRVEIAHTLCLSERQIKIWFQNRRMKWKKDH).

The protein belongs to the Antp homeobox family. Deformed subfamily.

Its subcellular location is the nucleus. In terms of biological role, sequence-specific transcription factor which is part of a developmental regulatory system that provides cells with specific positional identities on the anterior-posterior axis. The sequence is that of Homeobox protein Hox-B4a (hoxb4a) from Takifugu rubripes (Japanese pufferfish).